Reading from the N-terminus, the 94-residue chain is uncharacterized protein (94 aa).

Belongs to the phage portal family. HK97 subfamily.

This is an uncharacterized protein from Rickettsia conorii (strain ATCC VR-613 / Malish 7).